The primary structure comprises 788 residues: Diacylglycerol kinase gamma (788 aa).

Positions 83–93 (PRQETPDHPKE) are enriched in basic and acidic residues. Residues 83 to 150 (PRQETPDHPK…WGEPNAPASS (68 aa)) are disordered. Polar residues predominate over residues 95-109 (ASSSEPNVSDSNAES). 2 EF-hand domains span residues 172-207 (RPQD…MLHV) and 217-252 (ELRP…TIPL). Positions 185, 187, 189, 196, 230, 232, 234, and 241 each coordinate Ca(2+). Phorbol-ester/DAG-type zinc fingers lie at residues 268–318 (RHAW…IPGC) and 333–380 (QHAW…STAC). Positions 427–561 (PGTHPLLVLV…LDRWYLEVMP (135 aa)) constitute a DAGKc domain. The disordered stretch occupies residues 768–788 (MMGPPQKSSFFSLRRKSRSKD).

The protein belongs to the eukaryotic diacylglycerol kinase family. As to expression, expressed specifically in brain. Highly expressed in cerebellar Purkinje cells (at protein level).

It localises to the membrane. The protein localises to the cytoplasm. It is found in the cytosol. The protein resides in the cytoskeleton. The catalysed reaction is a 1,2-diacyl-sn-glycerol + ATP = a 1,2-diacyl-sn-glycero-3-phosphate + ADP + H(+). It catalyses the reaction 1,2-didecanoyl-sn-glycerol + ATP = 1,2-didecanoyl-sn-glycero-3-phosphate + ADP + H(+). It carries out the reaction 1,2-di-(9Z-octadecenoyl)-sn-glycerol + ATP = 1,2-di-(9Z-octadecenoyl)-sn-glycero-3-phosphate + ADP + H(+). The enzyme catalyses 1-octadecanoyl-2-(9Z,12Z)-octadecadienoyl-sn-glycerol + ATP = 1-octadecanoyl-2-(9Z,12Z-octadecadienoyl)-sn-glycero-3-phosphate + ADP + H(+). The catalysed reaction is 1-octadecanoyl-2-(5Z,8Z,11Z,14Z-eicosatetraenoyl)-sn-glycerol + ATP = 1-octadecanoyl-2-(5Z,8Z,11Z,14Z-eicosatetraenoyl)-sn-glycero-3-phosphate + ADP + H(+). It participates in lipid metabolism; glycerolipid metabolism. The activity is calcium-dependent. Requires phosphatidylserine for maximal activity. Its function is as follows. Diacylglycerol kinase that converts diacylglycerol/DAG into phosphatidic acid/phosphatidate/PA and regulates the respective levels of these two bioactive lipids. Thereby, acts as a central switch between the signaling pathways activated by these second messengers with different cellular targets and opposite effects in numerous biological processes. Has no apparent specificity with regard to the acyl compositions of diacylglycerol. Specifically expressed in the cerebellum where it controls the level of diacylglycerol which in turn regulates the activity of protein kinase C gamma. Through protein kinase C gamma, indirectly regulates the dendritic development of Purkinje cells, cerebellar long term depression and ultimately cerebellar motor coordination. The sequence is that of Diacylglycerol kinase gamma (Dgkg) from Rattus norvegicus (Rat).